The primary structure comprises 91 residues: Small ribosomal subunit protein uS19 (91 aa).

The protein belongs to the universal ribosomal protein uS19 family.

Protein S19 forms a complex with S13 that binds strongly to the 16S ribosomal RNA. This is Small ribosomal subunit protein uS19 from Bordetella bronchiseptica (strain ATCC BAA-588 / NCTC 13252 / RB50) (Alcaligenes bronchisepticus).